A 285-amino-acid chain; its full sequence is Bifunctional protein FolD (285 aa).

Residues Gly166–Ser168, Ser191, and Ile232 each bind NADP(+).

The protein belongs to the tetrahydrofolate dehydrogenase/cyclohydrolase family. Homodimer.

The catalysed reaction is (6R)-5,10-methylene-5,6,7,8-tetrahydrofolate + NADP(+) = (6R)-5,10-methenyltetrahydrofolate + NADPH. It carries out the reaction (6R)-5,10-methenyltetrahydrofolate + H2O = (6R)-10-formyltetrahydrofolate + H(+). The protein operates within one-carbon metabolism; tetrahydrofolate interconversion. Catalyzes the oxidation of 5,10-methylenetetrahydrofolate to 5,10-methenyltetrahydrofolate and then the hydrolysis of 5,10-methenyltetrahydrofolate to 10-formyltetrahydrofolate. This is Bifunctional protein FolD from Edwardsiella ictaluri (strain 93-146).